The sequence spans 204 residues: U1 small nuclear ribonucleoprotein C (204 aa).

The Matrin-type zinc finger occupies 4 to 36 (FFCDYCDVYLTHDSMSVRKAHNSGRNHLRNVVD). The tract at residues 65-204 (ANPMLPQNQP…GAGAPGHEKR (140 aa)) is disordered. Pro residues-rich tracts occupy residues 77-154 (GFPP…PGAP) and 166-192 (APPP…PGFA).

This sequence belongs to the U1 small nuclear ribonucleoprotein C family. U1 snRNP is composed of the 7 core Sm proteins B/B', D1, D2, D3, E, F and G that assemble in a heptameric protein ring on the Sm site of the small nuclear RNA to form the core snRNP, and at least 3 U1 snRNP-specific proteins U1-70K, U1-A and U1-C. U1-C interacts with U1 snRNA and the 5' splice-site region of the pre-mRNA.

It localises to the nucleus. In terms of biological role, component of the spliceosomal U1 snRNP, which is essential for recognition of the pre-mRNA 5' splice-site and the subsequent assembly of the spliceosome. U1-C is directly involved in initial 5' splice-site recognition for both constitutive and regulated alternative splicing. The interaction with the 5' splice-site seems to precede base-pairing between the pre-mRNA and the U1 snRNA. Stimulates commitment or early (E) complex formation by stabilizing the base pairing of the 5' end of the U1 snRNA and the 5' splice-site region. The polypeptide is U1 small nuclear ribonucleoprotein C (Fusarium vanettenii (strain ATCC MYA-4622 / CBS 123669 / FGSC 9596 / NRRL 45880 / 77-13-4) (Fusarium solani subsp. pisi)).